Reading from the N-terminus, the 211-residue chain is Ribosomal RNA small subunit methyltransferase G (211 aa).

S-adenosyl-L-methionine contacts are provided by residues glycine 76, leucine 81, 127–128, and arginine 142; that span reads VE.

This sequence belongs to the methyltransferase superfamily. RNA methyltransferase RsmG family.

It localises to the cytoplasm. It catalyses the reaction guanosine(527) in 16S rRNA + S-adenosyl-L-methionine = N(7)-methylguanosine(527) in 16S rRNA + S-adenosyl-L-homocysteine. Specifically methylates the N7 position of guanine in position 527 of 16S rRNA. This chain is Ribosomal RNA small subunit methyltransferase G, found in Vibrio vulnificus (strain CMCP6).